Reading from the N-terminus, the 78-residue chain is Large ribosomal subunit protein bL28 (78 aa).

It belongs to the bacterial ribosomal protein bL28 family.

In Treponema pallidum (strain Nichols), this protein is Large ribosomal subunit protein bL28 (rpmB).